The chain runs to 334 residues: Large ribosomal subunit protein uL3 (334 aa).

A compositionally biased stretch (basic residues) spans methionine 1–arginine 10. The interval methionine 1–alanine 21 is disordered.

It belongs to the universal ribosomal protein uL3 family. As to quaternary structure, part of the 50S ribosomal subunit. Forms a cluster with proteins L14 and L24e.

Its function is as follows. One of the primary rRNA binding proteins, it binds directly near the 3'-end of the 23S rRNA, where it nucleates assembly of the 50S subunit. The chain is Large ribosomal subunit protein uL3 from Methanococcus vannielii (strain ATCC 35089 / DSM 1224 / JCM 13029 / OCM 148 / SB).